Consider the following 417-residue polypeptide: Serine hydroxymethyltransferase (417 aa).

Residues leucine 112 and 116–118 (GHL) each bind (6S)-5,6,7,8-tetrahydrofolate. N6-(pyridoxal phosphate)lysine is present on lysine 221. Glutamate 247 provides a ligand contact to (6S)-5,6,7,8-tetrahydrofolate.

The protein belongs to the SHMT family. In terms of assembly, homodimer. Requires pyridoxal 5'-phosphate as cofactor.

The protein resides in the cytoplasm. It catalyses the reaction (6R)-5,10-methylene-5,6,7,8-tetrahydrofolate + glycine + H2O = (6S)-5,6,7,8-tetrahydrofolate + L-serine. Its pathway is one-carbon metabolism; tetrahydrofolate interconversion. It functions in the pathway amino-acid biosynthesis; glycine biosynthesis; glycine from L-serine: step 1/1. Catalyzes the reversible interconversion of serine and glycine with tetrahydrofolate (THF) serving as the one-carbon carrier. This reaction serves as the major source of one-carbon groups required for the biosynthesis of purines, thymidylate, methionine, and other important biomolecules. Also exhibits THF-independent aldolase activity toward beta-hydroxyamino acids, producing glycine and aldehydes, via a retro-aldol mechanism. This chain is Serine hydroxymethyltransferase, found in Borrelia garinii subsp. bavariensis (strain ATCC BAA-2496 / DSM 23469 / PBi) (Borreliella bavariensis).